The following is a 1487-amino-acid chain: Murinoglobulin-1 (1487 aa).

Residues 1-24 (MKKNREAQLCLFSALLAFLPFASL) form the signal peptide. Cys-48 and Cys-86 are oxidised to a cystine. Residues Asn-55 and Asn-247 are each glycosylated (N-linked (GlcNAc...) asparagine). 2 disulfides stabilise this stretch: Cys-251-Cys-283 and Cys-269-Cys-295. 4 N-linked (GlcNAc...) asparagine glycosylation sites follow: Asn-301, Asn-321, Asn-393, and Asn-508. 3 disulfide bridges follow: Cys-468–Cys-563, Cys-595–Cys-784, and Cys-643–Cys-689. The tract at residues 686-745 (PTYCYEMNMVVLSAPAVESELSPRGGEFEMMPLGVNKSPLPKEPPRKDPPPKDPVIETIR) is bait region. Asn-760, Asn-787, and Asn-882 each carry an N-linked (GlcNAc...) asparagine glycan. Cystine bridges form between Cys-860–Cys-896, Cys-934–Cys-1334, Cys-1092–Cys-1140, and Cys-1365–Cys-1480. The isoglutamyl cysteine thioester (Cys-Gln) cross-link spans 985–988 (CGEQ). Residue Asn-1004 is glycosylated (N-linked (GlcNAc...) asparagine). Asn-1153, Asn-1324, and Asn-1437 each carry an N-linked (GlcNAc...) asparagine glycan.

It belongs to the protease inhibitor I39 (alpha-2-macroglobulin) family. Monomer. As to expression, plasma.

It localises to the secreted. Its function is as follows. A proteinase activates the inhibitor by specific proteolysis in the bait region, which, by an unknown mechanism leads to reaction at the cysteinyl-glutamyl internal thiol ester site and to a conformational change, whereby the proteinase is trapped and/or covalently bound to the inhibitor. While in the tetrameric proteinase inhibitors steric inhibition is sufficiently strong, monomeric forms need a covalent linkage between the activated glutamyl residue of the original thiol ester and a terminal amino group of a lysine or another nucleophilic group on the proteinase, for inhibition to be effective. The protein is Murinoglobulin-1 of Rattus norvegicus (Rat).